We begin with the raw amino-acid sequence, 330 residues long: Biotin synthase (330 aa).

Residues 53 to 276 enclose the Radical SAM core domain; sequence NNIRLNVLLS…VFPFKELRLS (224 aa). [4Fe-4S] cluster is bound by residues C68, C72, and C75. [2Fe-2S] cluster is bound by residues C112, C144, C204, and R274.

Belongs to the radical SAM superfamily. Biotin synthase family. As to quaternary structure, homodimer. [4Fe-4S] cluster serves as cofactor. It depends on [2Fe-2S] cluster as a cofactor.

The enzyme catalyses (4R,5S)-dethiobiotin + (sulfur carrier)-SH + 2 reduced [2Fe-2S]-[ferredoxin] + 2 S-adenosyl-L-methionine = (sulfur carrier)-H + biotin + 2 5'-deoxyadenosine + 2 L-methionine + 2 oxidized [2Fe-2S]-[ferredoxin]. Its pathway is cofactor biosynthesis; biotin biosynthesis; biotin from 7,8-diaminononanoate: step 2/2. Catalyzes the conversion of dethiobiotin (DTB) to biotin by the insertion of a sulfur atom into dethiobiotin via a radical-based mechanism. The protein is Biotin synthase of Streptococcus agalactiae serotype V (strain ATCC BAA-611 / 2603 V/R).